Consider the following 353-residue polypeptide: Cellulose-complementing protein (353 aa).

Disordered stretches follow at residues 1-21 (MSASGSDEVAGGGQAGSPQDF), 75-94 (PQIAVAPPPPPVVPDPPAIV), and 117-337 (AVPA…SPRP). The segment covering 80–91 (APPPPPVVPDPP) has biased composition (pro residues). Composition is skewed to low complexity over residues 117-132 (AVPAEPPVQEAPVQAA) and 142-164 (IAEQAPPAAPDPASVPYANVAAA). Positions 165–175 (PVPPDPAPVTP) are enriched in pro residues. Polar residues-rich tracts occupy residues 196–226 (QVRTVQEGATPSRVPSRSMNAFPRTSASSIS) and 278–304 (STRSVRSNVSRMTSMTKTDTNSSQASR).

The polypeptide is Cellulose-complementing protein (ccpAX) (Komagataeibacter xylinus (Gluconacetobacter xylinus)).